Consider the following 354-residue polypeptide: Petrobactin import system permease protein FatC (354 aa).

9 helical membrane passes run 37 to 57 (YWIV…GLLV), 77 to 97 (IVAI…TVAF), 116 to 136 (LYSA…LINF), 141 to 161 (SFLF…GWLL), 168 to 188 (LQLM…VSTF), 214 to 234 (PAYF…IFAH), 259 to 279 (VIYT…LIGP), 302 to 322 (YIFP…YFLM), and 329 to 349 (QGVV…TIVL).

It belongs to the binding-protein-dependent transport system permease family. FecCD subfamily. The complex is composed of two ATP-binding proteins (FatE), two transmembrane proteins (FatC and FatD) and a solute-binding protein (FpuA).

Its subcellular location is the cell membrane. Functionally, part of an ABC transporter complex involved in ferric-petrobactin uptake. Probably responsible for the translocation of the substrate across the membrane. The polypeptide is Petrobactin import system permease protein FatC (Bacillus anthracis).